The following is a 638-amino-acid chain: Protein disulfide-isomerase A4 (638 aa).

Positions Met-1–Ala-20 are cleaved as a signal peptide. 2 Thioredoxin domains span residues Ala-21–Gln-162 and Gln-162–Lys-294. Residues Ala-24–Glu-50 form a disordered region. Residues Ser-32–Glu-50 are compositionally biased toward acidic residues. Residue Asn-36 is glycosylated (N-linked (GlcNAc...) asparagine). Positions Cys-84–Cys-87 match the CXXC motif. 2 cysteine pairs are disulfide-bonded: Cys-84/Cys-87 and Cys-199/Cys-202. Lys-359 carries the post-translational modification N6-acetyllysine. Residues Phe-498–Thr-629 enclose the Thioredoxin 3 domain. The short motif at Cys-548–Cys-551 is the CXXC element. A disulfide bond links Cys-548 and Cys-551. A Prevents secretion from ER motif is present at residues Lys-635 to Leu-638.

This sequence belongs to the protein disulfide isomerase family. As to quaternary structure, part of a large chaperone multiprotein complex comprising DNAJB11, HSP90B1, HSPA5, HYOU, PDIA2, PDIA4, PDIA6, PPIB, SDF2L1, UGGT1 and very small amounts of ERP29, but not, or at very low levels, CALR nor CANX. Component of a complex containing at least CRELD2, MANF, MATN3 and PDIA4.

It is found in the endoplasmic reticulum lumen. The protein resides in the melanosome. The catalysed reaction is Catalyzes the rearrangement of -S-S- bonds in proteins.. The protein is Protein disulfide-isomerase A4 (Pdia4) of Mus musculus (Mouse).